The following is a 117-amino-acid chain: Large ribosomal subunit protein uL18 (117 aa).

It belongs to the universal ribosomal protein uL18 family. As to quaternary structure, part of the 50S ribosomal subunit; part of the 5S rRNA/L5/L18/L25 subcomplex. Contacts the 5S and 23S rRNAs.

Functionally, this is one of the proteins that bind and probably mediate the attachment of the 5S RNA into the large ribosomal subunit, where it forms part of the central protuberance. The polypeptide is Large ribosomal subunit protein uL18 (Sphingopyxis alaskensis (strain DSM 13593 / LMG 18877 / RB2256) (Sphingomonas alaskensis)).